Here is a 371-residue protein sequence, read N- to C-terminus: Protease PrtS (371 aa).

Zn(2+) is bound at residue His169. Residue Glu170 is part of the active site. Positions 173 and 193 each coordinate Zn(2+). Residue His273 is the Proton donor of the active site. Residues 352–371 form a disordered region; sequence KEEDKDKGKDEGKDKAETKV.

The protein belongs to the peptidase M4 family. Requires Zn(2+) as cofactor.

It localises to the secreted. Its activity is regulated as follows. Inhibited by 8 mM 1,10-phenanthroline, but not by EDTA or PMSF. Its function is as follows. Metalloprotease involved in the inhibition of insect antibacterial peptides. Reduces the antibacterial activity of G.mellonella hemolymph by 50%. Reduces the antibacterial activity of cecropin A by 80% and completely inhibits cecropin B. This is Protease PrtS from Photorhabdus sp. (strain Az29).